Reading from the N-terminus, the 60-residue chain is Antimicrobial peptide Eval151 (60 aa).

The first 23 residues, 1-23 (MKVLPVLFLTLLVLISIPAETFC), serve as a signal peptide directing secretion. Residue Arg-36 is modified to Arginine amide. Residues 36–54 (RGKRNDFFRSDVSRDDESH) are compositionally biased toward basic and acidic residues. Positions 36-60 (RGKRNDFFRSDVSRDDESHPSPGQK) are disordered. Positions 37 to 60 (GKRNDFFRSDVSRDDESHPSPGQK) are excised as a propeptide.

This sequence belongs to the non-disulfide-bridged peptide (NDBP) superfamily. Expressed by the venom gland.

Its subcellular location is the secreted. Probable antimicrobial peptide. Has no inhibitory activity against herpes simplex virus type 1 (HSV-1). This is Antimicrobial peptide Eval151 from Euscorpiops validus (Scorpion).